The sequence spans 1436 residues: Antigen WC1.1 (1436 aa).

A signal peptide spans 1–25 (MALGRHLSLRGLCVLLLGTMVGGQA). SRCR domains follow at residues 28–131 (LRLK…VVCS), 134–234 (VRLA…VVCS), and 239–340 (VRLM…VICS). Intrachain disulfides connect cysteine 66-cysteine 130 and cysteine 97-cysteine 107. Asparagine 162 carries an N-linked (GlcNAc...) asparagine glycan. 2 cysteine pairs are disulfide-bonded: cysteine 172-cysteine 233 and cysteine 203-cysteine 213. Asparagine 244 and asparagine 256 each carry an N-linked (GlcNAc...) asparagine glycan. 3 disulfide bridges follow: cysteine 265/cysteine 329, cysteine 278/cysteine 339, and cysteine 309/cysteine 319. N-linked (GlcNAc...) asparagine glycosylation is found at asparagine 351, asparagine 424, and asparagine 444. SRCR domains lie at 376 to 476 (LRLV…VICS), 481 to 581 (LRMV…IWCA), 586 to 686 (IRLV…VICS), 689 to 789 (VRLA…VVCS), and 794 to 895 (VQLM…VICS). 3 cysteine pairs are disulfide-bonded: cysteine 401-cysteine 465, cysteine 414-cysteine 475, and cysteine 445-cysteine 455. N-linked (GlcNAc...) asparagine glycosylation is found at asparagine 499 and asparagine 531. 6 cysteine pairs are disulfide-bonded: cysteine 506–cysteine 570, cysteine 519–cysteine 580, cysteine 550–cysteine 560, cysteine 611–cysteine 675, cysteine 624–cysteine 685, and cysteine 655–cysteine 665. Asparagine 717 is a glycosylation site (N-linked (GlcNAc...) asparagine). 2 disulfide bridges follow: cysteine 727–cysteine 788 and cysteine 758–cysteine 768. An N-linked (GlcNAc...) asparagine glycan is attached at asparagine 799. Disulfide bonds link cysteine 820/cysteine 884, cysteine 833/cysteine 894, and cysteine 864/cysteine 874. Residues asparagine 897, asparagine 979, and asparagine 999 are each glycosylated (N-linked (GlcNAc...) asparagine). 3 SRCR domains span residues 931–1031 (LRLV…VICS), 1036–1136 (LRMV…ISCE), and 1155–1255 (LRLR…VRCS). Cystine bridges form between cysteine 956–cysteine 1020, cysteine 969–cysteine 1030, and cysteine 1000–cysteine 1010. N-linked (GlcNAc...) asparagine glycans are attached at residues asparagine 1054 and asparagine 1086. Intrachain disulfides connect cysteine 1061–cysteine 1125, cysteine 1074–cysteine 1135, and cysteine 1105–cysteine 1115. Asparagine 1173 and asparagine 1214 each carry an N-linked (GlcNAc...) asparagine glycan. 3 disulfides stabilise this stretch: cysteine 1180/cysteine 1244, cysteine 1193/cysteine 1254, and cysteine 1224/cysteine 1234. The interval 1337-1410 (EGLGSPDQMT…PGEGEESFWL (74 aa)) is disordered. Over residues 1348 to 1358 (VPDENYDDAEE) the composition is skewed to acidic residues. Over residues 1384-1393 (RSSQTGSFLN) the composition is skewed to polar residues. An N-linked (GlcNAc...) asparagine glycan is attached at asparagine 1393.

Expressed on subsets of CD4-CD8- gamma delta T lymphocytes.

The protein localises to the secreted. The sequence is that of Antigen WC1.1 from Bos taurus (Bovine).